We begin with the raw amino-acid sequence, 174 residues long: Dual-action ribosomal maturation protein DarP (174 aa).

It belongs to the DarP family.

Its subcellular location is the cytoplasm. Its function is as follows. Member of a network of 50S ribosomal subunit biogenesis factors which assembles along the 30S-50S interface, preventing incorrect 23S rRNA structures from forming. Promotes peptidyl transferase center (PTC) maturation. The chain is Dual-action ribosomal maturation protein DarP from Pseudomonas aeruginosa (strain LESB58).